Here is a 620-residue protein sequence, read N- to C-terminus: 1-deoxy-D-xylulose-5-phosphate synthase (620 aa).

Residues His80 and 121 to 123 (GHS) contribute to the thiamine diphosphate site. Asp152 contacts Mg(2+). Residues 153–154 (GA), Asn181, Tyr288, and Glu370 contribute to the thiamine diphosphate site. Asn181 is a Mg(2+) binding site.

Belongs to the transketolase family. DXPS subfamily. Homodimer. The cofactor is Mg(2+). Thiamine diphosphate is required as a cofactor.

It carries out the reaction D-glyceraldehyde 3-phosphate + pyruvate + H(+) = 1-deoxy-D-xylulose 5-phosphate + CO2. The protein operates within metabolic intermediate biosynthesis; 1-deoxy-D-xylulose 5-phosphate biosynthesis; 1-deoxy-D-xylulose 5-phosphate from D-glyceraldehyde 3-phosphate and pyruvate: step 1/1. In terms of biological role, catalyzes the acyloin condensation reaction between C atoms 2 and 3 of pyruvate and glyceraldehyde 3-phosphate to yield 1-deoxy-D-xylulose-5-phosphate (DXP). The polypeptide is 1-deoxy-D-xylulose-5-phosphate synthase (Shigella boydii serotype 18 (strain CDC 3083-94 / BS512)).